The primary structure comprises 136 residues: Large ribosomal subunit protein uL16 (136 aa).

Belongs to the universal ribosomal protein uL16 family. As to quaternary structure, part of the 50S ribosomal subunit.

Binds 23S rRNA and is also seen to make contacts with the A and possibly P site tRNAs. The sequence is that of Large ribosomal subunit protein uL16 from Wigglesworthia glossinidia brevipalpis.